Reading from the N-terminus, the 238-residue chain is Monocyte to macrophage differentiation factor (238 aa).

Topologically, residues 1 to 28 (MRFKNRFQRFMNHRAPANGRYKPTCYEH) are cytoplasmic. Residues 29 to 49 (AANCYTHAFLIVPAIVGSALL) form a helical membrane-spanning segment. Residues 50–61 (HRLSDDCWEKIT) are Lumenal-facing. The chain crosses the membrane as a helical span at residues 62 to 82 (AWIYGMGLCALFIVSTVFHIV). Residues 83–101 (SWKKSHLRTVEHCFHMCDR) lie on the Cytoplasmic side of the membrane. The chain crosses the membrane as a helical span at residues 102 to 122 (MVIYFFIAASYAPWLNLRELG). The Lumenal segment spans residues 123-124 (PL). A helical transmembrane segment spans residues 125-145 (ASHMRWFIWLMAAGGTIYVFL). Residues 146 to 151 (YHEKYK) are Cytoplasmic-facing. A helical transmembrane segment spans residues 152–172 (VVELFFYLTMGFSPALVVTSM). Topologically, residues 173–174 (NN) are lumenal. Residues 175–195 (TDGLQELACGGLIYCLGVVFF) form a helical membrane-spanning segment. The Cytoplasmic portion of the chain corresponds to 196-198 (KSD). Residues 199–219 (GIIPFAHAIWHLFVATAAAVH) traverse the membrane as a helical segment. The Lumenal segment spans residues 220-238 (YYAIWKYLYRSPTDFMRHL).

It belongs to the ADIPOR family. In terms of tissue distribution, exhibits relatively ubiquitous expression with preferential expression in mature (in vitro differentiated) macrophages.

It is found in the late endosome membrane. The protein localises to the lysosome membrane. Involved in the dynamics of lysosomal membranes associated with microglial activation following brain lesion. This is Monocyte to macrophage differentiation factor from Homo sapiens (Human).